Here is a 97-residue protein sequence, read N- to C-terminus: Large ribosomal subunit protein bL28 (97 aa).

It belongs to the bacterial ribosomal protein bL28 family.

This chain is Large ribosomal subunit protein bL28, found in Rickettsia africae (strain ESF-5).